The chain runs to 334 residues: L-lactate dehydrogenase B chain (334 aa).

30 to 58 (GQVGMACAVSVLLKELADELALVDILEDK) lines the NAD(+) pocket. Substrate is bound by residues R107, N139, and R170. N139 serves as a coordination point for NAD(+). Catalysis depends on H194, which acts as the Proton acceptor. T249 is a substrate binding site.

Belongs to the LDH/MDH superfamily. LDH family. As to quaternary structure, homotetramer.

It is found in the cytoplasm. It carries out the reaction (S)-lactate + NAD(+) = pyruvate + NADH + H(+). It participates in fermentation; pyruvate fermentation to lactate; (S)-lactate from pyruvate: step 1/1. Its function is as follows. Interconverts simultaneously and stereospecifically pyruvate and lactate with concomitant interconversion of NADH and NAD(+). This Xenopus laevis (African clawed frog) protein is L-lactate dehydrogenase B chain (ldhb).